Consider the following 620-residue polypeptide: Glutathione-regulated potassium-efflux system protein KefC (620 aa).

Transmembrane regions (helical) follow at residues 4-24 (HTLLQALIYLGSAALIVPIAV), 26-46 (LGLGSVLGYLIAGCIIGPWGL), 54-74 (SILHFAEIGVVLMLFVIGLEL), 90-110 (GALQMVVCGGLIGLFCMFLGL), 114-134 (VAELIGMTLALSSTAIAMQAM), 149-169 (FAVLLFQDIAAIPLVAMIPLL), 178-198 (LGAFALSALKVAGALALVVVL), 218-238 (VFSAVALFLVFGFGLLLEEVG), 270-290 (GLLLGLFFIGVGMSIDFGTLV), 294-314 (LRILLLLAGFLAIKIVMLWLV), 327-347 (WFAVLLGQGSEFAFVVFGAAQ), and 359-379 (ALTLAVALSMAATPIFLVLLT). Residues 399–518 (QPRVIVAGFG…AGVAMPERET (120 aa)) form the RCK N-terminal domain. A disordered region spans residues 599–620 (QGTAEGKHSGEVADEPEVKPSI).

Belongs to the monovalent cation:proton antiporter 2 (CPA2) transporter (TC 2.A.37) family. KefC subfamily. In terms of assembly, homodimer. Interacts with the regulatory subunit KefF.

It localises to the cell inner membrane. Functionally, pore-forming subunit of a potassium efflux system that confers protection against electrophiles. Catalyzes K(+)/H(+) antiport. The protein is Glutathione-regulated potassium-efflux system protein KefC of Salmonella paratyphi B (strain ATCC BAA-1250 / SPB7).